A 452-amino-acid polypeptide reads, in one-letter code: Phosphoglucosamine mutase (452 aa).

The active-site Phosphoserine intermediate is Ser-104. Mg(2+) is bound by residues Ser-104, Asp-241, Asp-243, and Asp-245. At Ser-104 the chain carries Phosphoserine.

This sequence belongs to the phosphohexose mutase family. Mg(2+) is required as a cofactor. Activated by phosphorylation.

The enzyme catalyses alpha-D-glucosamine 1-phosphate = D-glucosamine 6-phosphate. In terms of biological role, catalyzes the conversion of glucosamine-6-phosphate to glucosamine-1-phosphate. The chain is Phosphoglucosamine mutase from Arthrobacter sp. (strain FB24).